Here is a 432-residue protein sequence, read N- to C-terminus: Keratin, type I cytoskeletal 17 (432 aa).

The disordered stretch occupies residues 1–24 (MTTTIRQFTSSSSIKGSSGLGGGS). A head region spans residues 1–83 (MTTTIRQFTS…GGVDGLLAGG (83 aa)). A phosphoserine mark is found at S12 and S13. K15 is covalently cross-linked (Glycyl lysine isopeptide (Lys-Gly) (interchain with G-Cter in SUMO1); alternate). K15 participates in a covalent cross-link: Glycyl lysine isopeptide (Lys-Gly) (interchain with G-Cter in SUMO2); alternate. Phosphoserine is present on residues S25, S32, and S39. Residue S44 is modified to Phosphoserine; by RPS6KA1. Residues 84–120 (EKATMQNLNDRLASYLDKVRALEEANTELEVKIRDWY) form a coil 1A region. In terms of domain architecture, IF rod spans 84–395 (EKATMQNLND…RLLEGEDAHL (312 aa)). The residue at position 110 (T110) is a Phosphothreonine. The tract at residues 121-138 (QRQAPGPARDYSQYYRTI) is linker 1. A coil 1B region spans residues 139 to 230 (EELQNKILTA…NHEEEMNALR (92 aa)). The tract at residues 231–250 (GQVGGEINVEMDAAPGVDLS) is linker 12. The interval 251–392 (RILNEMRDQY…TYRRLLEGED (142 aa)) is coil 2. K278 participates in a covalent cross-link: Glycyl lysine isopeptide (Lys-Gly) (interchain with G-Cter in SUMO2). A Phosphothreonine modification is found at T279. Position 323 is a phosphoserine (S323). Positions 393-432 (AHLTQYKKEPVTTRQVRTIVEEVQDGKVISSREQVHQTTR) are tail. Glycyl lysine isopeptide (Lys-Gly) (interchain with G-Cter in SUMO1); alternate cross-links involve residues K399, K400, and K419. Glycyl lysine isopeptide (Lys-Gly) (interchain with G-Cter in SUMO2); alternate cross-links involve residues K399, K400, and K419.

Belongs to the intermediate filament family. Heterodimer of a type I and a type II keratin. KRT17 associates with KRT6 isomers (KRT6A or KRT6B). Interacts with TRADD and SFN. In terms of processing, phosphorylation at Ser-44 occurs in a growth- and stress-dependent fashion in skin keratinocytes, it has no effect on filament organization.

It localises to the cytoplasm. Its function is as follows. Type I keratin involved in the formation and maintenance of various skin appendages, specifically in determining shape and orientation of hair. Required for the correct growth of hair follicles, in particular for the persistence of the anagen (growth) state. Modulates the function of TNF-alpha in the specific context of hair cycling. Regulates protein synthesis and epithelial cell growth through binding to the adapter protein SFN and by stimulating Akt/mTOR pathway. Involved in tissue repair. May be a marker of basal cell differentiation in complex epithelia and therefore indicative of a certain type of epithelial 'stem cells'. Acts as a promoter of epithelial proliferation by acting a regulator of immune response in skin: promotes Th1/Th17-dominated immune environment contributing to the development of basaloid skin tumors. May act as an autoantigen in the immunopathogenesis of psoriasis, with certain peptide regions being a major target for autoreactive T-cells and hence causing their proliferation. The polypeptide is Keratin, type I cytoskeletal 17 (Pan troglodytes (Chimpanzee)).